A 419-amino-acid chain; its full sequence is MFKVKDLLLSPTTFEDPIFGTHLRYFQWYGYVASKDQNRPLLSLIRCTILTASIWLSCALMLARVFRGYENLNDGATSYATAVQYFAVSIAMFNAYVQRDKVISLLRVAHSDIQNLMHEADNREMELLVATQAYTRTITLLIWIPSVIAGLMAYSDCIYRSLFLPKSVFNVPAVRRGEEHPILLFQLFPFGELCDNFVVGYLGPWYALGLGITAIPLWHTFITCLMKYVNLKLQILNKRVEEMDITRLNSKLVIGRLTASELTFWQMQLFKEFVKEQLRIRKFVQELQYLICVPVMADFIIFSVLICFLFFALTVGVPSKMDYFFMFIYLFVMAGILWIYHWHATLIVECHDELSLAYFSCGWYNFEMPLQKMLVFMMMHAQRPMKMRALLVDLNLRTFIDIGRGAYSYFNLLRSSHLY.

Residues 1-41 (MFKVKDLLLSPTTFEDPIFGTHLRYFQWYGYVASKDQNRPL) are Cytoplasmic-facing. A helical transmembrane segment spans residues 42–62 (LSLIRCTILTASIWLSCALML). The Extracellular portion of the chain corresponds to 63–76 (ARVFRGYENLNDGA). Residues 77 to 97 (TSYATAVQYFAVSIAMFNAYV) traverse the membrane as a helical segment. The Cytoplasmic portion of the chain corresponds to 98–137 (QRDKVISLLRVAHSDIQNLMHEADNREMELLVATQAYTRT). A helical membrane pass occupies residues 138–158 (ITLLIWIPSVIAGLMAYSDCI). The Extracellular segment spans residues 159-196 (YRSLFLPKSVFNVPAVRRGEEHPILLFQLFPFGELCDN). Residues 197–217 (FVVGYLGPWYALGLGITAIPL) traverse the membrane as a helical segment. Residues 218 to 292 (WHTFITCLMK…FVQELQYLIC (75 aa)) lie on the Cytoplasmic side of the membrane. Residues 293 to 313 (VPVMADFIIFSVLICFLFFAL) form a helical membrane-spanning segment. Over 314–323 (TVGVPSKMDY) the chain is Extracellular. A helical transmembrane segment spans residues 324–344 (FFMFIYLFVMAGILWIYHWHA). The Cytoplasmic portion of the chain corresponds to 345 to 389 (TLIVECHDELSLAYFSCGWYNFEMPLQKMLVFMMMHAQRPMKMRA). The chain crosses the membrane as a helical span at residues 390–410 (LLVDLNLRTFIDIGRGAYSYF). Topologically, residues 411–419 (NLLRSSHLY) are extracellular.

It belongs to the insect chemoreceptor superfamily. Heteromeric odorant receptor channel (TC 1.A.69) family. Or30a subfamily. In terms of assembly, interacts with Orco. Complexes exist early in the endomembrane system in olfactory sensory neurons (OSNs), coupling these complexes to the conserved ciliary trafficking pathway. As to expression, expressed in olfactory sensory neurons in the antenna.

Its subcellular location is the cell membrane. Functionally, odorant receptor which mediates acceptance or avoidance behavior, depending on its substrates. The odorant receptor repertoire encodes a large collection of odor stimuli that vary widely in identity, intensity, and duration. May form a complex with Orco to form odorant-sensing units, providing sensitive and prolonged odorant signaling and calcium permeability. Specific receptor for geosmin, a microbial odorant that constitutes an ecologically relevant stimulus that alerts flies to the presence of harmful microbes and induces avoidance behavior. This is Odorant receptor 56a (Or56a) from Drosophila melanogaster (Fruit fly).